The chain runs to 332 residues: Leucine carboxyl methyltransferase 1 homolog (332 aa).

Residues lysine 22, arginine 57, glycine 83, aspartate 107, 153–154 (DL), and glutamate 180 each bind S-adenosyl-L-methionine.

The protein belongs to the methyltransferase superfamily. LCMT family.

It localises to the cytoplasm. Its subcellular location is the membrane. It carries out the reaction [phosphatase 2A protein]-C-terminal L-leucine + S-adenosyl-L-methionine = [phosphatase 2A protein]-C-terminal L-leucine methyl ester + S-adenosyl-L-homocysteine. Its function is as follows. Methylates the carboxyl group of the C-terminal leucine residue of protein phosphatase 2A (PP2A) catalytic subunits to form alpha-leucine ester residues. Involved in brassinosteroid (BR) signaling. Plays a negative role in BR signaling pathway. Functions as a positive regulator of BRI1 receptor-kinase degradation. Methylates PP2A, thus facilitating its association with activated BRI1. This leads to receptor dephosphorylation and degradation, and thus to the termination of BR signaling. May act upstream of ASK7/BIN2. Involved in methylation of PP2A during environmental stress responses. The polypeptide is Leucine carboxyl methyltransferase 1 homolog (Arabidopsis thaliana (Mouse-ear cress)).